A 271-amino-acid polypeptide reads, in one-letter code: Norsolorinic acid ketoreductase (271 aa).

Residues 1–22 (MNGSLSQHDQERLSTPYRDGPP) form a disordered region. NADP(+) contacts are provided by Ile36, Asn112, Tyr185, Lys189, Val216, and Thr218. The active-site Proton donor is Tyr185. Residue Lys189 is the Lowers pKa of active site Tyr of the active site.

It belongs to the short-chain dehydrogenases/reductases (SDR) family.

It localises to the cytoplasm. The protein localises to the cytosol. The protein resides in the vacuole. The catalysed reaction is (1'S)-averantin + NADP(+) = norsolorinic acid + NADPH + H(+). The protein operates within mycotoxin biosynthesis; aflatoxin biosynthesis. Functionally, norsolorinic acid ketoreductase; part of the gene cluster that mediates the biosynthesis of aflatoxins, a group of polyketide-derived furanocoumarins, and part of the most toxic and carcinogenic compounds among the known mycotoxins. The four major aflatoxins produced by A.parasiticus are aflatoxin B1 (AFB1), aflatoxin B2 (AFB2), aflatoxin G1 (AFG1) and aflatoxin G2 (AFG2). Within the aflatoxin pathway, the norsolorinic acid ketoreductase aflD performs the second step by catalyzing the dehydration of norsolorinic acid (NOR) to form (1'S)-averantin (AVN). The biosynthesis of aflatoxins begins with the norsolorinic acid synthase aflC that combines a hexanoyl starter unit produced by the fatty acid synthase aflA/aflB and 7 malonyl-CoA extender units to synthesize the precursor NOR. The second step is the conversion of NOR to averantin and requires the norsolorinic acid ketoreductase aflD, which catalyzes the dehydration of norsolorinic acid to form (1'S)-averantin. The norsolorinic acid reductases aflE and aflF may also play a role in the conversion of NOR to AVN. The cytochrome P450 monooxygenase aflG then catalyzes the hydroxylation of AVN to 5'hydroxyaverantin (HAVN). The next step is performed by the 5'-hydroxyaverantin dehydrogenase aflH that transforms HAVN to 5'-oxoaverantin (OAVN) which is further converted to averufin (AVF) by aflK that plays a dual role in the pathway, as a 5'-oxoaverantin cyclase that mediates conversion of 5'-oxoaverantin, as well as a versicolorin B synthase in a later step in the pathway. The averufin oxidase aflI catalyzes the conversion of AVF to versiconal hemiacetal acetate (VHA). VHA is then the substrate for the versiconal hemiacetal acetate esterase aflJ to yield versiconal (VAL). Versicolorin B synthase aflK then converts VAL to versicolorin B (VERB) by closing the bisfuran ring of aflatoxin which is required for DNA-binding, thus giving to aflatoxin its activity as a mutagen. Then, the activity of the versicolorin B desaturase aflL leads to versicolorin A (VERA). A branch point starts from VERB since it can also be converted to dihydrodemethylsterigmatocystin (DMDHST), probably also by aflL, VERA being a precursor for aflatoxins B1 and G1, and DMDHST for aflatoxins B2 and G2. Next, the versicolorin reductase aflM and the cytochrome P450 monooxygenase aflN are involved in conversion of VERA to demethylsterigmatocystin (DMST). AflX and aflY seem also involved in this step, through probable aflX-mediated epoxide ring-opening step following versicolorin A oxidation and aflY-mediated Baeyer-Villiger oxidation required for the formation of the xanthone ring. The methyltransferase aflO then leads to the modification of DMST to sterigmatocystin (ST), and of DMDHST to dihydrosterigmatocystin (DHST). Both ST and DHST are then substrates of the O-methyltransferase aflP to yield O-methylsterigmatocystin (OMST) and dihydro-O-methylsterigmatocystin (DHOMST), respectively. Finally OMST is converted to aflatoxins B1 and G1, and DHOMST to aflatoxins B2 and G2, via the action of several enzymes including O-methylsterigmatocystin oxidoreductase aflQ, the cytochrome P450 monooxygenase aflU, but also the NADH-dependent flavin oxidoreductase nadA which is specifically required for the synthesis of AFG1. This chain is Norsolorinic acid ketoreductase, found in Aspergillus parasiticus (strain ATCC 56775 / NRRL 5862 / SRRC 143 / SU-1).